A 197-amino-acid chain; its full sequence is Nascent polypeptide-associated complex subunit alpha (197 aa).

Residues 1 to 18 are compositionally biased toward basic and acidic residues; sequence MTGSTETRHNEKDVKEPQ. The disordered stretch occupies residues 1-30; sequence MTGSTETRHNEKDVKEPQVDSDADSDNEAI. Over residues 19–28 the composition is skewed to acidic residues; it reads VDSDADSDNE. The NAC-A/B domain occupies 58–123; sequence SRSEKKARKL…AKIEDLTQHA (66 aa). The segment at 134–155 is disordered; it reads TREAPQLKTVEEDDNEDVEEDS. A compositionally biased stretch (acidic residues) spans 144–155; it reads EEDDNEDVEEDS. The region spanning 158–195 is the UBA domain; that stretch reads IEEKDIELVISQANTTRNKAIRALKDADNDIVNAIMSL.

Belongs to the NAC-alpha family.

Functionally, may promote appropriate targeting of ribosome-nascent polypeptide complexes. The polypeptide is Nascent polypeptide-associated complex subunit alpha (Caenorhabditis briggsae).